The sequence spans 185 residues: Lysozyme g (185 aa).

E73 is a catalytic residue.

This sequence belongs to the glycosyl hydrolase 23 family.

It carries out the reaction Hydrolysis of (1-&gt;4)-beta-linkages between N-acetylmuramic acid and N-acetyl-D-glucosamine residues in a peptidoglycan and between N-acetyl-D-glucosamine residues in chitodextrins.. This chain is Lysozyme g, found in Cyprinus carpio (Common carp).